The chain runs to 326 residues: Glycerol-3-phosphate dehydrogenase [NAD(P)+] (326 aa).

NADPH-binding residues include S10, F11, R31, and K108. Residues K108, G136, and S138 each coordinate sn-glycerol 3-phosphate. A140 contributes to the NADPH binding site. K191, D246, S256, R257, and N258 together coordinate sn-glycerol 3-phosphate. The active-site Proton acceptor is the K191. R257 lines the NADPH pocket. Positions 281 and 283 each coordinate NADPH.

The protein belongs to the NAD-dependent glycerol-3-phosphate dehydrogenase family.

Its subcellular location is the cytoplasm. It catalyses the reaction sn-glycerol 3-phosphate + NAD(+) = dihydroxyacetone phosphate + NADH + H(+). It carries out the reaction sn-glycerol 3-phosphate + NADP(+) = dihydroxyacetone phosphate + NADPH + H(+). It participates in membrane lipid metabolism; glycerophospholipid metabolism. In terms of biological role, catalyzes the reduction of the glycolytic intermediate dihydroxyacetone phosphate (DHAP) to sn-glycerol 3-phosphate (G3P), the key precursor for phospholipid synthesis. The polypeptide is Glycerol-3-phosphate dehydrogenase [NAD(P)+] (Ehrlichia chaffeensis (strain ATCC CRL-10679 / Arkansas)).